Here is a 165-residue protein sequence, read N- to C-terminus: Large ribosomal subunit protein uL10 (165 aa).

It belongs to the universal ribosomal protein uL10 family. Part of the ribosomal stalk of the 50S ribosomal subunit. The N-terminus interacts with L11 and the large rRNA to form the base of the stalk. The C-terminus forms an elongated spine to which L12 dimers bind in a sequential fashion forming a multimeric L10(L12)X complex.

Functionally, forms part of the ribosomal stalk, playing a central role in the interaction of the ribosome with GTP-bound translation factors. The polypeptide is Large ribosomal subunit protein uL10 (Pectobacterium atrosepticum (strain SCRI 1043 / ATCC BAA-672) (Erwinia carotovora subsp. atroseptica)).